Reading from the N-terminus, the 316-residue chain is MDALLKEIEKLSQPSSLQKENNDVCDLCFMQMKKISNYQLLCEECGQLKDWFEPDYNEKFTVYSRLKIVGANSSYHQRDLDKANSSDYSSLQFHHILEELKSLNVKYMDAGQKPFPIQVLKETAHSYNQVQQHRVIRSITKLQILASILRSICLKLNIACTVADAARFTQLNTKGISRGMDLLRSLFEDNKITLNVDLNPIDSFINSTYSALQIKQIHQELQEENVYNLKEIVKSFIVYADEKNIGVDLNRRTVVIATMYNVLRRAYYPIEIDTVVYQCKIRKNTITRALKMYEDYYSHFKSLYEQYQLNAAKKLI.

This sequence belongs to the asfivirus C315R family.

Functionally, putative initation factor. The sequence is that of Initiation factor TFIIB homolog from Ornithodoros (relapsing fever ticks).